The primary structure comprises 322 residues: Probable ATP-dependent 6-phosphofructokinase (322 aa).

ATP contacts are provided by residues Gly11, 72–73 (RF), and 102–105 (GDGS). Residue Asp103 coordinates Mg(2+). Residues 125–127 (TID), 169–171 (MGR), Glu222, Lys249, and 255–258 (YLQR) each bind substrate. Residue Asp127 is the Proton acceptor of the active site.

Belongs to the phosphofructokinase type A (PFKA) family. Homotetramer. It depends on Mg(2+) as a cofactor.

It is found in the cytoplasm. It catalyses the reaction beta-D-fructose 6-phosphate + ATP = beta-D-fructose 1,6-bisphosphate + ADP + H(+). Its pathway is carbohydrate degradation; glycolysis; D-glyceraldehyde 3-phosphate and glycerone phosphate from D-glucose: step 3/4. Catalyzes the phosphorylation of D-fructose 6-phosphate to fructose 1,6-bisphosphate by ATP, the first committing step of glycolysis. In Malacoplasma penetrans (strain HF-2) (Mycoplasma penetrans), this protein is Probable ATP-dependent 6-phosphofructokinase (pfkA).